Consider the following 249-residue polypeptide: Methionine aminopeptidase 2 (249 aa).

H76 contacts substrate. Residues D94, D105, and H168 each contribute to the a divalent metal cation site. H175 contacts substrate. Residues E202 and E233 each coordinate a divalent metal cation.

In terms of assembly, monomer. Requires Co(2+) as cofactor. Zn(2+) is required as a cofactor. The cofactor is Mn(2+). Fe(2+) serves as cofactor.

The protein resides in the cytoplasm. It catalyses the reaction Release of N-terminal amino acids, preferentially methionine, from peptides and arylamides.. Functionally, removes the N-terminal methionine from nascent proteins. The N-terminal methionine is often cleaved when the second residue in the primary sequence is small and uncharged (Met-Ala-, Cys, Gly, Pro, Ser, Thr, or Val). Requires deformylation of the N(alpha)-formylated initiator methionine before it can be hydrolyzed. This Bacillus subtilis (strain 168) protein is Methionine aminopeptidase 2.